The sequence spans 98 residues: Probable sodium channel toxin Ts27 (98 aa).

Positions 1–22 (MYNMVSLFIVAVLLLTYANVEG) are cleaved as a signal peptide. 4 disulfide bridges follow: Cys36–Cys88, Cys40–Cys63, Cys49–Cys68, and Cys53–Cys70.

It belongs to the long (4 C-C) scorpion toxin superfamily. Sodium channel inhibitor family. Expressed by the venom gland.

It localises to the secreted. Probable sodium channel toxin. The protein is Probable sodium channel toxin Ts27 of Tityus serrulatus (Brazilian scorpion).